Here is a 228-residue protein sequence, read N- to C-terminus: uncharacterized protein (228 aa).

Positions 90–115 are disordered; sequence TDESEESSSANNTTTTASHTLSNSKK. Over residues 96-113 the composition is skewed to low complexity; it reads SSSANNTTTTASHTLSNS.

Its subcellular location is the cytoplasm. The protein resides in the cell cortex. Its function is as follows. Deletion results in antifungal drug fluconazole-resistant phenotype. This is an uncharacterized protein from Saccharomyces cerevisiae (strain ATCC 204508 / S288c) (Baker's yeast).